Consider the following 142-residue polypeptide: Ribonuclease VapC31 (142 aa).

Positions 3–139 (LLDANVLLAA…ARFASVRHIR (137 aa)) constitute a PINc domain. 2 residues coordinate Mg(2+): D5 and D108.

It belongs to the PINc/VapC protein family. Requires Mg(2+) as cofactor.

Functionally, toxic component of a type II toxin-antitoxin (TA) system. An RNase. Its toxic effect is neutralized by coexpression with cognate antitoxin VapB31. The sequence is that of Ribonuclease VapC31 from Mycobacterium tuberculosis (strain CDC 1551 / Oshkosh).